The following is a 232-amino-acid chain: 7-cyano-7-deazaguanine synthase (232 aa).

Residue 8–18 (FSGGQDSTTCL) coordinates ATP. Cys189, Cys198, Cys201, and Cys204 together coordinate Zn(2+).

Belongs to the QueC family. It depends on Zn(2+) as a cofactor.

The enzyme catalyses 7-carboxy-7-deazaguanine + NH4(+) + ATP = 7-cyano-7-deazaguanine + ADP + phosphate + H2O + H(+). It functions in the pathway purine metabolism; 7-cyano-7-deazaguanine biosynthesis. In terms of biological role, catalyzes the ATP-dependent conversion of 7-carboxy-7-deazaguanine (CDG) to 7-cyano-7-deazaguanine (preQ(0)). The polypeptide is 7-cyano-7-deazaguanine synthase (Yersinia enterocolitica serotype O:8 / biotype 1B (strain NCTC 13174 / 8081)).